The chain runs to 326 residues: Glycine N(alpha)-acyltransferase (326 aa).

This sequence belongs to the acetyltransferase family.

The catalysed reaction is a (3R)-hydroxyacyl-[ACP] + glycine = a lyso-glycine lipid + holo-[ACP] + H(+). The enzyme catalyses (3R)-hydroxyhexadecanoyl-[ACP] + glycine = N-[(3R)-3-hydroxyhexadecanoyl]-glycine + holo-[ACP] + H(+). Its pathway is lipid metabolism. Its function is as follows. Is involved in the production of glycine lipids (GL), which are phosphorus-free membrane lipids. Catalyzes the first step of GL biosynthesis, i.e. the N-acylation of glycine via addition of a 3-hydroxy fatty acyl group, to form a range of monoacylated glycine (also named lyso-glycine lipids or lyso-GL). As an example, catalyzes the production of commendamide, an N-acylated (3-OH C16:0) derivative of glycine with hemolytic activity and the ability to solubilize cholesterol micelles; this compound can also activate NF-kB through the G-protein coupled receptor GPCR G2A/132. The sequence is that of Glycine N(alpha)-acyltransferase from Phocaeicola vulgatus (strain ATCC 8482 / DSM 1447 / JCM 5826 / CCUG 4940 / NBRC 14291 / NCTC 11154) (Bacteroides vulgatus).